Here is a 913-residue protein sequence, read N- to C-terminus: Eukaryotic translation initiation factor 3 subunit C (913 aa).

Residues 1–44 (MSRFFTTGSDSESESSLSGEELVTKPVGGNYGKQPLLLSEDEED) form a disordered region. Residues 8-21 (GSDSESESSLSGEE) are compositionally biased toward low complexity. Residues S9, S11, S13, S15, S16, S18, and S39 each carry the phosphoserine modification. K99 carries the post-translational modification N6-acetyllysine. 2 disordered regions span residues 157-301 (TSYK…GGEW) and 522-542 (QLTP…NEGE). S166, S178, S181, and S182 each carry phosphoserine. The segment covering 166–190 (SADEDAEKNEEDSEGSSDEDEDEDG) has biased composition (acidic residues). Residues 199 to 216 (KKSEAPSGESRKFLKKMD) show a composition bias toward basic and acidic residues. Residues 217 to 232 (DEDEDSEDSEDDEDWD) show a composition bias toward acidic residues. Over residues 261–278 (PTTDEDKKAAEKKREDKA) the composition is skewed to basic and acidic residues. The span at 522–531 (QLTPPEGSSK) shows a compositional bias: polar residues. T524 carries the post-translational modification Phosphothreonine. K643 bears the N6-acetyllysine mark. Residues 673–849 (FHLHINLELL…QTVVMHRTEP (177 aa)) enclose the PCI domain. Residues 885–913 (FRDQKDGYRKNEGYMRRGGYRQQQSQTAY) form a disordered region. Residues 886-899 (RDQKDGYRKNEGYM) show a composition bias toward basic and acidic residues. S909 carries the phosphoserine modification.

The protein belongs to the eIF-3 subunit C family. As to quaternary structure, component of the eukaryotic translation initiation factor 3 (eIF-3) complex, which is composed of 13 subunits: EIF3A, EIF3B, EIF3C, EIF3D, EIF3E, EIF3F, EIF3G, EIF3H, EIF3I, EIF3J, EIF3K, EIF3L and EIF3M. The eIF-3 complex appears to include 3 stable modules: module A is composed of EIF3A, EIF3B, EIF3G and EIF3I; module B is composed of EIF3F, EIF3H, and EIF3M; and module C is composed of EIF3C, EIF3D, EIF3E, EIF3K and EIF3L. EIF3C of module C binds EIF3B of module A and EIF3H of module B, thereby linking the three modules. EIF3J is a labile subunit that binds to the eIF-3 complex via EIF3B. The eIF-3 complex interacts with RPS6KB1 under conditions of nutrient depletion. Mitogenic stimulation leads to binding and activation of a complex composed of MTOR and RPTOR, leading to phosphorylation and release of RPS6KB1 and binding of EIF4B to eIF-3. Interacts with ALKBH4, IFIT1 and IFIT2. Interacts with BZW2/5MP1. Phosphorylated. Phosphorylation is enhanced upon serum stimulation.

The protein resides in the cytoplasm. Functionally, component of the eukaryotic translation initiation factor 3 (eIF-3) complex, which is required for several steps in the initiation of protein synthesis. The eIF-3 complex associates with the 40S ribosome and facilitates the recruitment of eIF-1, eIF-1A, eIF-2:GTP:methionyl-tRNAi and eIF-5 to form the 43S pre-initiation complex (43S PIC). The eIF-3 complex stimulates mRNA recruitment to the 43S PIC and scanning of the mRNA for AUG recognition. The eIF-3 complex is also required for disassembly and recycling of post-termination ribosomal complexes and subsequently prevents premature joining of the 40S and 60S ribosomal subunits prior to initiation. The eIF-3 complex specifically targets and initiates translation of a subset of mRNAs involved in cell proliferation, including cell cycling, differentiation and apoptosis, and uses different modes of RNA stem-loop binding to exert either translational activation or repression. The polypeptide is Eukaryotic translation initiation factor 3 subunit C (Pongo abelii (Sumatran orangutan)).